Reading from the N-terminus, the 418-residue chain is Tyrosine--tRNA ligase (418 aa).

An L-tyrosine-binding site is contributed by Tyr-34. The 'HIGH' region motif lies at 39–48 (PTADSLHLGH). 2 residues coordinate L-tyrosine: Tyr-169 and Gln-173. The short motif at 229-233 (KFGKS) is the 'KMSKS' region element. Lys-232 is a binding site for ATP. The 67-residue stretch at 352 to 418 (LNLVDMLVTA…GKKKYAVLTY (67 aa)) folds into the S4 RNA-binding domain.

It belongs to the class-I aminoacyl-tRNA synthetase family. TyrS type 1 subfamily. As to quaternary structure, homodimer.

It is found in the cytoplasm. It catalyses the reaction tRNA(Tyr) + L-tyrosine + ATP = L-tyrosyl-tRNA(Tyr) + AMP + diphosphate + H(+). Functionally, catalyzes the attachment of tyrosine to tRNA(Tyr) in a two-step reaction: tyrosine is first activated by ATP to form Tyr-AMP and then transferred to the acceptor end of tRNA(Tyr). The sequence is that of Tyrosine--tRNA ligase from Streptococcus pyogenes serotype M3 (strain SSI-1).